Here is a 660-residue protein sequence, read N- to C-terminus: Phosphatidylinositol-binding clathrin assembly protein (660 aa).

S2 bears the N-acetylserine mark. An ENTH domain is found at 14–145 (QHSVTGSAVS…VSYRQVAFDF (132 aa)). S16 and S20 each carry phosphoserine. The tract at residues 221–294 (KYFDMKKNQC…LEGKKIKDST (74 aa)) is interaction with PIMREG. K238 is covalently cross-linked (Glycyl lysine isopeptide (Lys-Gly) (interchain with G-Cter in SUMO2)). 2 positions are modified to phosphoserine: S303 and S315. Positions 556-566 (GTTKNDVSWSQ) are enriched in polar residues. The disordered stretch occupies residues 556 to 580 (GTTKNDVSWSQPGEKKLTGGSNWQP).

The protein belongs to the PICALM/SNAP91 family. In terms of assembly, binds to clathrin; involves primarily the C-terminal sequences, but the full-length protein is required for full binding capacity. Binds phosphatidylinositol 4,5- bisphosphate. Interacts with PIMREG; this interaction may change the subcellular location into the nucleus. Interacts with AP2A1 (via its alpha-appendage domain). Interacts (via N-terminus) with VAMP2; VAMP3; VAMP7 and VAMP8 (Via N-terminus). Interacts with LC3/MAP1LC3A. In terms of tissue distribution, skins and livers of 1-week-old mice.

The protein localises to the cell membrane. It localises to the membrane. It is found in the clathrin-coated pit. The protein resides in the golgi apparatus. Its subcellular location is the cytoplasmic vesicle. The protein localises to the clathrin-coated vesicle. It localises to the nucleus. Functionally, cytoplasmic adapter protein that plays a critical role in clathrin-mediated endocytosis which is important in processes such as internalization of cell receptors, synaptic transmission or removal of apoptotic cells. Recruits AP-2 and attaches clathrin triskelions to the cytoplasmic side of plasma membrane leading to clathrin-coated vesicles (CCVs) assembly. Furthermore, regulates clathrin-coated vesicle size and maturation by directly sensing and driving membrane curvature. In addition to binding to clathrin, mediates the endocytosis of small R-SNARES (Soluble NSF Attachment Protein REceptors) between plasma membranes and endosomes including VAMP2, VAMP3, VAMP4, VAMP7 or VAMP8. In turn, PICALM-dependent SNARE endocytosis is required for the formation and maturation of autophagic precursors. Modulates thereby autophagy and the turnover of autophagy substrates such as MAPT/TAU or amyloid precursor protein cleaved C-terminal fragment (APP-CTF). The polypeptide is Phosphatidylinositol-binding clathrin assembly protein (Picalm) (Mus musculus (Mouse)).